Reading from the N-terminus, the 397-residue chain is tRNA-specific 2-thiouridylase MnmA (397 aa).

ATP-binding positions include 6–13 (AMSGGVDS) and leucine 32. The active-site Nucleophile is the cysteine 101. Cysteine 101 and cysteine 199 are oxidised to a cystine. Glycine 125 lines the ATP pocket. Residues 148–150 (KDQ) form an interaction with tRNA region. Cysteine 199 acts as the Cysteine persulfide intermediate in catalysis.

The protein belongs to the MnmA/TRMU family.

It localises to the cytoplasm. The enzyme catalyses S-sulfanyl-L-cysteinyl-[protein] + uridine(34) in tRNA + AH2 + ATP = 2-thiouridine(34) in tRNA + L-cysteinyl-[protein] + A + AMP + diphosphate + H(+). Functionally, catalyzes the 2-thiolation of uridine at the wobble position (U34) of tRNA, leading to the formation of s(2)U34. The chain is tRNA-specific 2-thiouridylase MnmA from Clavibacter sepedonicus (Clavibacter michiganensis subsp. sepedonicus).